The following is a 42-amino-acid chain: Potassium channel toxin gamma-KTx 1.2 (42 aa).

4 disulfides stabilise this stretch: C5-C23, C11-C34, C20-C39, and C24-C41.

This sequence belongs to the ergtoxin family. Gamma-KTx 1 subfamily. In terms of tissue distribution, expressed by the venom gland.

It is found in the secreted. Its function is as follows. Blocks Kv11/ERG potassium channels. This Centruroides elegans (Bark scorpion) protein is Potassium channel toxin gamma-KTx 1.2.